A 185-amino-acid polypeptide reads, in one-letter code: Elongation factor P (185 aa).

It belongs to the elongation factor P family.

It is found in the cytoplasm. The protein operates within protein biosynthesis; polypeptide chain elongation. Its function is as follows. Involved in peptide bond synthesis. Stimulates efficient translation and peptide-bond synthesis on native or reconstituted 70S ribosomes in vitro. Probably functions indirectly by altering the affinity of the ribosome for aminoacyl-tRNA, thus increasing their reactivity as acceptors for peptidyl transferase. The polypeptide is Elongation factor P (Bacillus velezensis (strain DSM 23117 / BGSC 10A6 / LMG 26770 / FZB42) (Bacillus amyloliquefaciens subsp. plantarum)).